The primary structure comprises 105 residues: PTS system lactose-specific EIIA component (105 aa).

The region spanning 4–102 (EEMTLLGFEI…IHHLIELYKR (99 aa)) is the PTS EIIA type-3 domain. His-78 acts as the Tele-phosphohistidine intermediate in catalysis. Phosphohistidine; by HPr is present on His-78. Asp-81 contributes to the Mg(2+) binding site.

In terms of assembly, homotrimer. The cofactor is Mg(2+).

It localises to the cytoplasm. In terms of biological role, the phosphoenolpyruvate-dependent sugar phosphotransferase system (sugar PTS), a major carbohydrate active transport system, catalyzes the phosphorylation of incoming sugar substrates concomitantly with their translocation across the cell membrane. The enzyme II LacEF PTS system is involved in lactose transport. The chain is PTS system lactose-specific EIIA component from Lactococcus lactis subsp. lactis (Streptococcus lactis).